The following is a 645-amino-acid chain: MPSSHRLSATILIFLSLTYISSSSNLVEDITDKQDSSEDDDHLQTFPTPPPIGTTTASADSLFNRMNKILRKEEKQKSQNFQIFNEKDLVTNSNANPYFSTTRKPKNRSDSSQKARDPDPQNQVIAGIPDLSDPCFRRYENSIIVNAQPYERRSSTGLIHCKSHCLNSQIGVYSCRSFVYDNVNRVCDLFAHVGDQAPARLLKFQTRDYFEPTDIVHCLSMINGESSSSAPSSEDEDSPPSPPPSAPIVALATNTDKRDEHEEMTETIEDITVASPSSDSCPRGKQSTFLRTEGFELFSHDDQELVVGDVAECAKACIENKINGVALKCKSFDFLSSTSTCAFTSEAAVPVGNGQLKQREDASYHEKICVSKSFVESCPSTFFSRHPQMILVGFAESVSDSPSFEHCFDTCLNSYQLFGFNCTSGMYYFEENQLNCILNSENRNTQRELFTEENTDIVDYFEVECTTPRSKQSKRKMAGVRNFETDAIGADKMVTDHEDVEEDGSKWESWSECQDGKQTRRKICANFNQIEDCAEEVRDCVDEIDSTDMRMSIKRAGELENNDHEQIEDNNTDASEDPVPTKEEIAEVKQKIRRTGFKCPLNECCRVFLSCSYGLRHNSHTKQLEWCRRPCDPSLSSFKRSRLLR.

The N-terminal stretch at 1-23 (MPSSHRLSATILIFLSLTYISSS) is a signal peptide. Disordered regions lie at residues 30 to 58 (ITDKQDSSEDDDHLQTFPTPPPIGTTTAS) and 92 to 129 (NSNANPYFSTTRKPKNRSDSSQKARDPDPQNQVIAGIP). The segment covering 92-102 (NSNANPYFSTT) has biased composition (polar residues). Asparagine 107 is a glycosylation site (N-linked (GlcNAc...) asparagine). Residues 107 to 119 (NRSDSSQKARDPD) are compositionally biased toward basic and acidic residues. One can recognise a PAN 1 domain in the interval 135–214 (CFRRYENSII…QTRDYFEPTD (80 aa)). Cystine bridges form between cysteine 161-cysteine 187 and cysteine 165-cysteine 175. Positions 225 to 247 (ESSSSAPSSEDEDSPPSPPPSAP) are disordered. PAN domains lie at 281–369 (CPRG…EKIC) and 378–465 (CPST…EVEC). Cystine bridges form between cysteine 281-cysteine 369, cysteine 313-cysteine 341, cysteine 317-cysteine 329, cysteine 378-cysteine 465, cysteine 407-cysteine 436, and cysteine 411-cysteine 422. Asparagine 421 carries N-linked (GlcNAc...) asparagine glycosylation. Over residues 556–567 (AGELENNDHEQI) the composition is skewed to basic and acidic residues. Residues 556-582 (AGELENNDHEQIEDNNTDASEDPVPTK) form a disordered region. Asparagine 570 carries an N-linked (GlcNAc...) asparagine glycan.

This is an uncharacterized protein from Caenorhabditis elegans.